Consider the following 99-residue polypeptide: Cyclin-dependent protein kinase inhibitor SMR7 (99 aa).

Residues 49-70 (ICITPTARGAKTPECPAAPRKR) form a disordered region.

Expressed in root meristems after induction.

Functionally, probable cyclin-dependent protein kinase (CDK) inhibitor that functions as a repressor of mitosis in the endoreduplication cell cycle. Acts as a potent cell cycle inhibitor, regulating a hydroxyurea-dependent checkpoint in leaves. This Arabidopsis thaliana (Mouse-ear cress) protein is Cyclin-dependent protein kinase inhibitor SMR7.